The primary structure comprises 1732 residues: Transient receptor potential cation channel subfamily M member 3 (1732 aa).

Residues 1 to 894 (MPEPWGTVYF…RKIYEFYNAP (894 aa)) are Cytoplasmic-facing. Calmodulin-binding stretches follow at residues 192–215 (NFEL…MTTG), 300–323 (TGKY…QKIN), 601–624 (RKRF…KLLG), and 793–816 (RKNS…LEFK). The tract at residues 617–625 (PKALKLLGM) is required for the inhibitory action of G-beta/gamma-subunits of heterotrimeric G-proteins. Residue Ser-796 coordinates 1,2-dioctanoyl-sn-glycero-3-phospho-(1D-myo-inositol-4,5-bisphosphate). A helical membrane pass occupies residues 895-918 (IVKFWFYTLAYIGYLMLFNYIVLV). Over 919-925 (KMERWPS) the chain is Extracellular. A helical transmembrane segment spans residues 926–948 (TQEWIVISYIFTLGIEKMREILM). The Cytoplasmic portion of the chain corresponds to 949 to 964 (SEPGKLLQKVKVWLQE). Residues 965 to 985 (YWNVTDLIAILLFSVGMILRL) traverse the membrane as a helical segment. Residues 986–989 (QDQP) lie on the Extracellular side of the membrane. A helical transmembrane segment spans residues 990 to 1013 (FRSDGRVIYCVNIIYWYIRLLDIF). Residues 1014–1028 (GVNKYLGPYVMMIGK) are Cytoplasmic-facing. Residues Lys-1017 and Tyr-1018 each contribute to the 1,2-dioctanoyl-sn-glycero-3-phospho-(1D-myo-inositol-4,5-bisphosphate) site. Residues 1029 to 1056 (MMIDMMYFVIIMLVVLMSFGVARQAILF) form a helical membrane-spanning segment. Residues 1057-1111 (PNEEPSWKLAKNIFYMPYWMIYGEVFADQIDPPCGQNETREDGKIIQLPPCKTGA) lie on the Extracellular side of the membrane. Residues 1112-1137 (WIVPAIMACYLLVANILLVNLLIAVF) traverse the membrane as a helical segment. Residues 1138–1732 (NNTFFEVKSI…AFQSFESKHN (595 aa)) lie on the Cytoplasmic side of the membrane. Residues 1241 to 1301 (ERIRVTSERV…LERLTGLERA (61 aa)) adopt a coiled-coil conformation. Over residues 1459–1476 (PVPSTAPSSSAYATLAPT) the composition is skewed to low complexity. Disordered stretches follow at residues 1459–1478 (PVPS…PTDR) and 1611–1732 (REAE…SKHN). Composition is skewed to polar residues over residues 1635–1653 (AISS…NNIT), 1690–1701 (NTASLRNPFQRS), and 1720–1732 (RTSA…SKHN).

This sequence belongs to the transient receptor (TC 1.A.4) family. LTrpC subfamily. TRPM3 sub-subfamily. As to quaternary structure, homotetramer. Interacts with TRPM1; the interaction results in the formation of a heteromultimeric cation channel complex that are functionally different from the homomeric channels. In terms of tissue distribution, expressed primarily in the kidney and, at lower levels, in brain, testis, ovary, pancreas and spinal cord. Expression in the brain and kidney was determined at protein level. In the kidney, expressed predominantly in the collecting tubular epithelium in the medulla, medullary rays, and periglomerular regions; in the brain, highest levels are found in the cerebellum, choroid plexus, the locus coeruleus, the posterior thalamus and the substantia nigra. Down-regulated in renal tumors compared to normal kidney. Expressed in the lens.

Its subcellular location is the cell membrane. The catalysed reaction is Ca(2+)(in) = Ca(2+)(out). It carries out the reaction Mn(2+)(in) = Mn(2+)(out). The enzyme catalyses Zn(2+)(in) = Zn(2+)(out). It catalyses the reaction Mg(2+)(in) = Mg(2+)(out). With respect to regulation, activated by the neurosteroid pregnelonone sulfate (PregS); PregS activates the channel by shifting its current-voltage activation curve toward more negative membrane potentials and also potentiates temperature-induced activation. Activated by sphingosine. Activated by heat. Intracellular Ca(2+) inhibits TRPM3 probably via interaction with Ca(2+)/calmodulin. Intracellular Mg(2+) inhibits TRPM3 activity. Both intracellular and extracellular protons block TRPM3 through propable binding sites in the pore region. Positively regulated by phosphoinositide phosphoinositol 4,5-biphosphate (PI(4,5)P2). Strongly inhibited by activation of G(i)-coupled receptors via direct binding with G-betagamma-subunits of heterotrimeric G-proteins. Functionally, constitutively active, non-selective divalent cation-conducting channel that is permeable to Ca(2+), Mn(2+), and Mg(2+), with a high permeability for Ca(2+). However, can be enhanced by increasing temperature and by ligands, including the endogenous neurosteroid pregnenolone sulfate and sphingosine-1 and suppressed by intracellular Mg(2+). Implicated in a variety of cellular processes, including insulin/peptide secretion, vascular constriction and dilation, noxious heat sensing, inflammatory and spontaneous pain sensitivity. In neurons of the dorsal root ganglia, functions as thermosensitive channel for the detection of noxious heat and spontaneous pain. Suggested to function as an ionotropic steroid receptor in beta-cell, indeed pregnenolone sulfate leads to Ca(2+) influx and enhanced insulin secretion. Mediates Zn(2+) uptake into the lumen of pancreatic beta cell secretory granules, thereby regulating insulin secretion. Forms heteromultimeric ion channels with TRPM1 which are permeable for Ca(2+) and Zn(2+) ions. Exists as multiple splice variants which differ significantly in their biophysical properties. The polypeptide is Transient receptor potential cation channel subfamily M member 3 (Homo sapiens (Human)).